The primary structure comprises 258 residues: Hydroxyethylthiazole kinase (258 aa).

Residue Met-37 coordinates substrate. Positions 112 and 158 each coordinate ATP. Ala-185 contacts substrate.

Belongs to the Thz kinase family. Mg(2+) serves as cofactor.

The catalysed reaction is 5-(2-hydroxyethyl)-4-methylthiazole + ATP = 4-methyl-5-(2-phosphooxyethyl)-thiazole + ADP + H(+). Its pathway is cofactor biosynthesis; thiamine diphosphate biosynthesis; 4-methyl-5-(2-phosphoethyl)-thiazole from 5-(2-hydroxyethyl)-4-methylthiazole: step 1/1. Functionally, catalyzes the phosphorylation of the hydroxyl group of 4-methyl-5-beta-hydroxyethylthiazole (THZ). The sequence is that of Hydroxyethylthiazole kinase from Rhizobium etli (strain CIAT 652).